Here is a 374-residue protein sequence, read N- to C-terminus: Cyclin-dependent kinase 9 (374 aa).

A Protein kinase domain is found at 19 to 318 (YEKLAKIGQG…SDDALNHDFF (300 aa)). Residues 25-33 (IGQGTFGEV) and Lys-48 contribute to the ATP site. The active-site Proton acceptor is the Asp-151. The interval 345–374 (PRRRGHMPQQPANQNRNPATTSQSEFDRVF) is disordered. The segment covering 354–368 (QPANQNRNPATTSQS) has biased composition (polar residues).

It belongs to the protein kinase superfamily. CMGC Ser/Thr protein kinase family. CDC2/CDKX subfamily. As to quaternary structure, component of the super elongation complex (SEC). Associates with ccnt1/cyclin-T1, ccnt2/cyclin-T2 or ccnk/cyclin-K to form active P-TEFb.

The protein localises to the nucleus. Its subcellular location is the cytoplasm. It localises to the PML body. It carries out the reaction L-seryl-[protein] + ATP = O-phospho-L-seryl-[protein] + ADP + H(+). The enzyme catalyses L-threonyl-[protein] + ATP = O-phospho-L-threonyl-[protein] + ADP + H(+). The catalysed reaction is [DNA-directed RNA polymerase] + ATP = phospho-[DNA-directed RNA polymerase] + ADP + H(+). Protein kinase involved in the regulation of transcription. Member of the cyclin-dependent kinase pair (CDK9/cyclin-T) complex, also called positive transcription elongation factor b (P-TEFb), which facilitates the transition from abortive to productive elongation by phosphorylating the CTD (C-terminal domain) of the large subunit of RNA polymerase II (RNAP II) polr2a, supt5h and rdbp. This complex is inactive when in the 7SK snRNP complex form. Regulates cytokine inducible transcription networks by facilitating promoter recognition of target transcription factors. P-TEFb is also involved in cotranscriptional histone modification, mRNA processing and mRNA export. The protein is Cyclin-dependent kinase 9 of Danio rerio (Zebrafish).